Consider the following 166-residue polypeptide: Regulatory protein RecX (166 aa).

This sequence belongs to the RecX family.

Its subcellular location is the cytoplasm. Its function is as follows. Modulates RecA activity. This chain is Regulatory protein RecX, found in Escherichia coli (strain K12 / MC4100 / BW2952).